A 349-amino-acid chain; its full sequence is Probable ethanolamine kinase (349 aa).

It belongs to the choline/ethanolamine kinase family.

It is found in the cytoplasm. The enzyme catalyses ethanolamine + ATP = phosphoethanolamine + ADP + H(+). It participates in phospholipid metabolism; phosphatidylethanolamine biosynthesis; phosphatidylethanolamine from ethanolamine: step 1/3. Highly specific for ethanolamine phosphorylation. May be a rate-controlling step in phosphatidylethanolamine biosynthesis. The polypeptide is Probable ethanolamine kinase (etnk) (Nematostella vectensis (Starlet sea anemone)).